A 723-amino-acid polypeptide reads, in one-letter code: Probable dipeptidyl-peptidase 5 (723 aa).

Positions 1 to 19 are cleaved as a signal peptide; the sequence is MAALRWLSAVVAVSTTVLA. N-linked (GlcNAc...) asparagine glycans are attached at residues Asn79, Asn97, Asn154, Asn255, Asn381, and Asn451. Ser561 (charge relay system) is an active-site residue. A glycan (N-linked (GlcNAc...) asparagine) is linked at Asn608. Catalysis depends on charge relay system residues Asp644 and His676.

Belongs to the peptidase S9C family.

The protein resides in the secreted. Its function is as follows. Extracellular dipeptidyl-peptidase which removes N-terminal dipeptides sequentially from polypeptides having unsubstituted N-termini. This is Probable dipeptidyl-peptidase 5 (dpp5) from Aspergillus terreus (strain NIH 2624 / FGSC A1156).